Here is a 315-residue protein sequence, read N- to C-terminus: Probable cell division protein WhiA (315 aa).

A DNA-binding region (H-T-H motif) is located at residues 280 to 313 (SLRELGKMLNPPVGKSGVNHRLRRIEKIADELKQ).

The protein belongs to the WhiA family.

In terms of biological role, involved in cell division and chromosome segregation. The chain is Probable cell division protein WhiA from Clostridium botulinum (strain ATCC 19397 / Type A).